Consider the following 352-residue polypeptide: Aliphatic aldoxime dehydratase (352 aa).

Ser-219 is an an aliphatic aldoxime binding site. His-299 provides a ligand contact to heme b. His-320 contacts an aliphatic aldoxime. His-320 is a catalytic residue.

This sequence belongs to the heme-containing dehydratase family. Homodimer. It depends on heme b as a cofactor. Ca(2+) serves as cofactor.

The enzyme catalyses an aliphatic aldoxime = a nitrile + H2O. With respect to regulation, active when the heme iron is in the ferrous state. Is very sensitive to AgNO(3), is also inhibited by hydroxylamine and phenylhydrazine, and hardly inhibited by thiol reagents. Not sensitive to chelating agents and serine-modifying reagents. In terms of biological role, catalyzes the dehydration of aldoximes to their corresponding nitrile. Aliphatic aldoximes are more effective substrates than aromatic aldoximes. Shows high activity with butyraldoxime and acetaldoxime, but only weak activity with the aromatic aldoxime pyridine-2-aldoxime. Cannot use benzaldoxime, isonitrosoacetophenone and pyridine-4-aldoxime. Is involved in the metabolism of aldoxime in vivo. This is Aliphatic aldoxime dehydratase from Pseudomonas chlororaphis (Pseudomonas aureofaciens).